The following is a 197-amino-acid chain: Holliday junction branch migration complex subunit RuvA (197 aa).

The segment at 1–63 (MFEYLNGKLV…EDAHSLYGFV (63 aa)) is domain I. Residues 64–142 (NESEKALFLR…ATGAVGISLL (79 aa)) are domain II. The flexible linker stretch occupies residues 142–146 (LDAAP). The tract at residues 147–197 (ASNLALEEAIEALQALGYKATELKKIEKKLAQEAGLTSEEYIKSALKLMMK) is domain III.

It belongs to the RuvA family. In terms of assembly, homotetramer. Forms an RuvA(8)-RuvB(12)-Holliday junction (HJ) complex. HJ DNA is sandwiched between 2 RuvA tetramers; dsDNA enters through RuvA and exits via RuvB. An RuvB hexamer assembles on each DNA strand where it exits the tetramer. Each RuvB hexamer is contacted by two RuvA subunits (via domain III) on 2 adjacent RuvB subunits; this complex drives branch migration. In the full resolvosome a probable DNA-RuvA(4)-RuvB(12)-RuvC(2) complex forms which resolves the HJ.

Its subcellular location is the cytoplasm. Its function is as follows. The RuvA-RuvB-RuvC complex processes Holliday junction (HJ) DNA during genetic recombination and DNA repair, while the RuvA-RuvB complex plays an important role in the rescue of blocked DNA replication forks via replication fork reversal (RFR). RuvA specifically binds to HJ cruciform DNA, conferring on it an open structure. The RuvB hexamer acts as an ATP-dependent pump, pulling dsDNA into and through the RuvAB complex. HJ branch migration allows RuvC to scan DNA until it finds its consensus sequence, where it cleaves and resolves the cruciform DNA. The polypeptide is Holliday junction branch migration complex subunit RuvA (Lactococcus lactis subsp. cremoris (strain MG1363)).